Consider the following 469-residue polypeptide: 24-hydroxycholesterol 7-alpha-hydroxylase (469 aa).

The N-terminal stretch at 1–23 is a signal peptide; sequence MELISPTVIIILGCLALFLLLQR. The next 3 helical transmembrane spans lie at 267 to 287, 352 to 372, and 412 to 432; these read GLLL…WTLA, VEIL…PFWL, and FQCP…ILIL. Position 414 (cysteine 414) interacts with heme.

Belongs to the cytochrome P450 family. Heme is required as a cofactor. Liver specific.

It is found in the endoplasmic reticulum membrane. It localises to the microsome membrane. The catalysed reaction is (24S)-hydroxycholesterol + reduced [NADPH--hemoprotein reductase] + O2 = (24S)-7alpha-dihydroxycholesterol + oxidized [NADPH--hemoprotein reductase] + H2O + H(+). It participates in steroid metabolism; cholesterol degradation. The protein operates within lipid metabolism; bile acid biosynthesis. A cytochrome P450 monooxygenase involved in neural cholesterol clearance through bile acid synthesis. Catalyzes 7-alpha hydroxylation of (24S)-hydroxycholesterol, a neural oxysterol that is metabolized to bile acids in the liver. Mechanistically, uses molecular oxygen inserting one oxygen atom into a substrate, and reducing the second into a water molecule, with two electrons provided by NADPH via cytochrome P450 reductase (CPR; NADPH-ferrihemoprotein reductase). The sequence is that of 24-hydroxycholesterol 7-alpha-hydroxylase from Homo sapiens (Human).